We begin with the raw amino-acid sequence, 856 residues long: uncharacterized protein (856 aa).

This is an uncharacterized protein from Rickettsia felis (strain ATCC VR-1525 / URRWXCal2) (Rickettsia azadi).